Here is a 313-residue protein sequence, read N- to C-terminus: GTP cyclohydrolase MptA (313 aa).

Belongs to the GTP cyclohydrolase IV family. In terms of assembly, homodimer. It depends on Fe(2+) as a cofactor.

The catalysed reaction is GTP + H2O = 7,8-dihydroneopterin 2',3'-cyclic phosphate + formate + diphosphate + H(+). It participates in cofactor biosynthesis; 5,6,7,8-tetrahydromethanopterin biosynthesis. Its function is as follows. Converts GTP to 7,8-dihydro-D-neopterin 2',3'-cyclic phosphate, the first intermediate in the biosynthesis of coenzyme methanopterin. In Methanoculleus marisnigri (strain ATCC 35101 / DSM 1498 / JR1), this protein is GTP cyclohydrolase MptA.